The primary structure comprises 526 residues: Osmo-independent choline transporter BetT1 (526 aa).

The Cytoplasmic portion of the chain corresponds to 1-17 (MWSKRDEQKTYPPIRLN). The helical transmembrane segment at 18-38 (PFVFWSSAISISIFGMLFVLF) threads the bilayer. At 39–56 (PETSQHGLTWIQQQVNQL) the chain is on the periplasmic side. A helical transmembrane segment spans residues 57-77 (FGWYYMLVIILSLGFVAWLAF). Topologically, residues 78 to 93 (SQVGNIPLGKAQDKPE) are cytoplasmic. A helical transmembrane segment spans residues 94–114 (FGYLVWTSMLFSAGIGIALLY). Residues 115–148 (YGVAEPVDHFLRPPEGQGGTVEAAQNAMMYSFLH) lie on the Periplasmic side of the membrane. The helical transmembrane segment at 149–169 (WGIHGWVLYALVGVTLGYFAF) threads the bilayer. The Cytoplasmic portion of the chain corresponds to 170 to 200 (RRDLPLALRSALYPIFGERIHGLVGHMVDGF). The chain crosses the membrane as a helical span at residues 201-221 (GILATIISLVTNLGIGALVMI). At 222–236 (SGISYLFPDLPNTSS) the chain is on the periplasmic side. The chain crosses the membrane as a helical span at residues 237–257 (TLVVTVIMMMLVATLTTVIGI). At 258-272 (EKGLAWLSRINLRLL) the chain is on the cytoplasmic side. A helical transmembrane segment spans residues 273 to 293 (YLLLLFVFLTGPTNHLLNGLV). The Periplasmic segment spans residues 294–323 (QNTGDYLSHFVQKSFDLYLYDKNATGWLAS). Residues 324–344 (WTIFYWAWWIAWAPFVGMFIA) traverse the membrane as a helical segment. Topologically, residues 345 to 354 (RISKGRTIRE) are cytoplasmic. A helical membrane pass occupies residues 355-375 (VVLGVCLIPLGFTLAWISIFG). Over 376 to 417 (NTAIDLILNHGQQIIGSLVIQDPALSLFKLLEYLPFHPYVAG) the chain is Periplasmic. Residues 418-438 (IVVVICFVLFLTPVGSGTLMI) traverse the membrane as a helical segment. Residues 439–457 (ANLSSQGGSSDSDSPIWLR) are Cytoplasmic-facing. A helical membrane pass occupies residues 458–478 (VFWSIAITIVSIGLLLAGSFS). At 479–482 (AMQS) the chain is on the periplasmic side. The helical transmembrane segment at 483 to 503 (AVVLCGLPFSVILLLYMFGLA) threads the bilayer. Topologically, residues 504–526 (KALKQETQQPVVESHTTETSGSD) are cytoplasmic.

The protein belongs to the BCCT transporter (TC 2.A.15) family.

It localises to the cell inner membrane. Sodium-independent high-affinity choline uptake system. Uptake is not proton coupled. May play a role in metabolic adaptation to choline-containing environments. The chain is Osmo-independent choline transporter BetT1 from Acinetobacter baylyi (strain ATCC 33305 / BD413 / ADP1).